We begin with the raw amino-acid sequence, 319 residues long: Transcriptional regulator LsrR (319 aa).

Positions 32 to 55 form a DNA-binding region, H-T-H motif; it reads QSEISERLGLTRLKVSRLLEKGHQ.

This sequence belongs to the SorC transcriptional regulatory family.

It localises to the cytoplasm. Its activity is regulated as follows. Inactivated by phosphorylated autoinducer-2 (phospho-AI-2). Phospho-AI-2 acts by binding to LsrR, which is then unable to bind to the promoter regions, allowing the transcription of the target genes. In terms of biological role, transcriptional regulator that represses the expression of the lsr operon (lsrACDBFGE) in the absence of the quorum-sensing signaling molecule autoinducer 2 (AI-2). It also represses the expression of the lsrRK operon. Acts by binding to the intergenic region between the lsr operon and lsrR. In the presence of phosphorylated autoinducer-2 (phospho-AI-2), LsrR is inactivated, leading to the transcription of the genes. The regulatory function of LsrR was thought to be limited to the lsr operon, but it was subsequently shown to be involved, directly or indirectly, in the regulation of SPI-1 and flagella genes. It negatively regulates the expression of those genes, which reduces the ability of Salmonella to invade host cells. This Salmonella typhimurium (strain LT2 / SGSC1412 / ATCC 700720) protein is Transcriptional regulator LsrR.